A 375-amino-acid polypeptide reads, in one-letter code: F420-dependent formate dehydrogenase 2 subunit beta (375 aa).

2 consecutive 4Fe-4S ferredoxin-type domains span residues 268 to 291 and 320 to 349; these read PEPE…DVCP and IRLS…AKIY. Positions 280, 283, 286, 290, 329, 332, 335, and 339 each coordinate [4Fe-4S] cluster.

It belongs to the FrhB family. In terms of assembly, dimer of an alpha (FdhA2) and a beta (FdhB2) subunit. Requires [4Fe-4S] cluster as cofactor. It depends on FAD as a cofactor. Zn(2+) is required as a cofactor.

It catalyses the reaction oxidized coenzyme F420-(gamma-L-Glu)(n) + formate + 2 H(+) = reduced coenzyme F420-(gamma-L-Glu)(n) + CO2. Functionally, catalyzes the oxidation of formate to carbon dioxide, with coenzyme F420 as the electron acceptor. In vitro can also use methyl viologen as electron acceptor. The polypeptide is F420-dependent formate dehydrogenase 2 subunit beta (Methanococcus maripaludis (strain DSM 14266 / JCM 13030 / NBRC 101832 / S2 / LL)).